The chain runs to 93 residues: Putative ribosomal protein eL43-like (93 aa).

The C4-type zinc-finger motif lies at 40–61; that stretch reads CSFCGKTKMKRRAVKIRHCNSC.

It belongs to the eukaryotic ribosomal protein eL43 family.

The chain is Putative ribosomal protein eL43-like (RPL37AP8) from Homo sapiens (Human).